A 106-amino-acid polypeptide reads, in one-letter code: Replication restart protein PriB (106 aa).

The 100-residue stretch at 4–103 folds into the SSB domain; the sequence is MNRLVLSGTV…LHAEQIELID (100 aa).

Belongs to the PriB family. Homodimer. Interacts with PriA and DnaT. Component of the replication restart primosome. Primosome assembly occurs via a 'hand-off' mechanism. PriA binds to replication forks, subsequently PriB then DnaT bind; DnaT then displaces ssDNA to generate the helicase loading substrate.

Involved in the restart of stalled replication forks, which reloads the replicative helicase on sites other than the origin of replication; the PriA-PriB pathway is the major replication restart pathway. During primosome assembly it facilitates complex formation between PriA and DnaT on DNA; stabilizes PriA on DNA. Stimulates the DNA unwinding activity of PriA helicase. In Pectobacterium atrosepticum (strain SCRI 1043 / ATCC BAA-672) (Erwinia carotovora subsp. atroseptica), this protein is Replication restart protein PriB.